We begin with the raw amino-acid sequence, 349 residues long: 4-hydroxy-2-oxovalerate aldolase 2 (349 aa).

A Pyruvate carboxyltransferase domain is found at 12 to 264; it reads VRMTDTSLRD…KTGIDFFDIA (253 aa). 20-21 is a binding site for substrate; sequence RD. Mn(2+) is bound at residue Asp-21. His-24 (proton acceptor) is an active-site residue. 2 residues coordinate substrate: Ser-174 and His-203. Residues His-203 and His-205 each coordinate Mn(2+). Substrate is bound at residue Tyr-294.

This sequence belongs to the 4-hydroxy-2-oxovalerate aldolase family.

The enzyme catalyses (S)-4-hydroxy-2-oxopentanoate = acetaldehyde + pyruvate. This is 4-hydroxy-2-oxovalerate aldolase 2 (bphI-2) from Mycolicibacterium smegmatis (strain ATCC 700084 / mc(2)155) (Mycobacterium smegmatis).